Reading from the N-terminus, the 103-residue chain is Large ribosomal subunit protein bL21 (103 aa).

This sequence belongs to the bacterial ribosomal protein bL21 family. In terms of assembly, part of the 50S ribosomal subunit. Contacts protein L20.

Its function is as follows. This protein binds to 23S rRNA in the presence of protein L20. The protein is Large ribosomal subunit protein bL21 of Paracidovorax citrulli (strain AAC00-1) (Acidovorax citrulli).